We begin with the raw amino-acid sequence, 242 residues long: Orotidine 5'-phosphate decarboxylase (242 aa).

Substrate-binding positions include Asp-21, Lys-43, Asp-71–Thr-80, Thr-124, Arg-185, Gln-195, Gly-215, and Arg-216. Catalysis depends on Lys-73, which acts as the Proton donor.

Belongs to the OMP decarboxylase family. Type 1 subfamily. As to quaternary structure, homodimer.

The enzyme catalyses orotidine 5'-phosphate + H(+) = UMP + CO2. It functions in the pathway pyrimidine metabolism; UMP biosynthesis via de novo pathway; UMP from orotate: step 2/2. In terms of biological role, catalyzes the decarboxylation of orotidine 5'-monophosphate (OMP) to uridine 5'-monophosphate (UMP). This chain is Orotidine 5'-phosphate decarboxylase, found in Methylococcus capsulatus (strain ATCC 33009 / NCIMB 11132 / Bath).